A 304-amino-acid polypeptide reads, in one-letter code: GTP cyclohydrolase FolE2 (304 aa).

Belongs to the GTP cyclohydrolase IV family.

It catalyses the reaction GTP + H2O = 7,8-dihydroneopterin 3'-triphosphate + formate + H(+). Its pathway is cofactor biosynthesis; 7,8-dihydroneopterin triphosphate biosynthesis; 7,8-dihydroneopterin triphosphate from GTP: step 1/1. Converts GTP to 7,8-dihydroneopterin triphosphate. This Chromohalobacter salexigens (strain ATCC BAA-138 / DSM 3043 / CIP 106854 / NCIMB 13768 / 1H11) protein is GTP cyclohydrolase FolE2.